The sequence spans 147 residues: Hemoglobin subunit epsilon (147 aa).

One can recognise a Globin domain in the interval 3–147 (HFTAEEKSTI…VATALAHKYH (145 aa)). A phosphoserine mark is found at Ser-14 and Ser-51. Residues His-64 and His-93 each contribute to the heme b site.

Belongs to the globin family. Heterotetramer of two alpha chains and two epsilon chains in early embryonic hemoglobin Gower-2; two zeta chains and two epsilon chains in early embryonic hemoglobin Gower-1. In terms of tissue distribution, red blood cells.

In terms of biological role, the epsilon chain is a beta-type chain of early mammalian embryonic hemoglobin. The chain is Hemoglobin subunit epsilon (HBE1) from Eulemur fulvus fulvus (Brown lemur).